We begin with the raw amino-acid sequence, 446 residues long: Tubulin beta chain (446 aa).

8 residues coordinate GTP: Gln11, Glu69, Ser138, Gly142, Thr143, Gly144, Asn204, and Asn226. Mg(2+) is bound at residue Glu69. Residues 423–446 (QQYQDATADEEEGEYEEEPAEEEQ) are disordered. A compositionally biased stretch (acidic residues) spans 429 to 446 (TADEEEGEYEEEPAEEEQ).

The protein belongs to the tubulin family. Dimer of alpha and beta chains. A typical microtubule is a hollow water-filled tube with an outer diameter of 25 nm and an inner diameter of 15 nM. Alpha-beta heterodimers associate head-to-tail to form protofilaments running lengthwise along the microtubule wall with the beta-tubulin subunit facing the microtubule plus end conferring a structural polarity. Microtubules usually have 13 protofilaments but different protofilament numbers can be found in some organisms and specialized cells. Mg(2+) is required as a cofactor.

The protein resides in the cytoplasm. It localises to the cytoskeleton. In terms of biological role, tubulin is the major constituent of microtubules, a cylinder consisting of laterally associated linear protofilaments composed of alpha- and beta-tubulin heterodimers. Microtubules grow by the addition of GTP-tubulin dimers to the microtubule end, where a stabilizing cap forms. Below the cap, tubulin dimers are in GDP-bound state, owing to GTPase activity of alpha-tubulin. The polypeptide is Tubulin beta chain (Pleurotus sajor-caju (Oyster mushroom)).